A 127-amino-acid chain; its full sequence is Histone H2B type 1-A (127 aa).

The segment at 1–32 (MPEVSAKGTTISKKGFKKAVTKTQKKEGRKRK) is disordered. Position 2 is an N-acetylproline (Pro-2). N6-acetyllysine; alternate is present on residues Lys-7, Lys-13, Lys-14, Lys-17, Lys-18, Lys-22, and Lys-25. Residues Lys-7, Lys-13, Lys-14, Lys-17, Lys-18, Lys-22, Lys-25, and Lys-36 each carry the N6-crotonyllysine; alternate modification. N6-lactoyllysine; alternate is present on residues Lys-7 and Lys-13. Lys-7 is covalently cross-linked (Glycyl lysine isopeptide (Lys-Gly) (interchain with G-Cter in SUMO2); alternate). Lys-17, Lys-18, Lys-22, and Lys-25 each carry N6-lactoyllysine; alternate. Residue Lys-22 forms a Glycyl lysine isopeptide (Lys-Gly) (interchain with G-Cter in SUMO2); alternate linkage. An N6-succinyllysine; alternate modification is found at Lys-36. Residue Lys-36 forms a Glycyl lysine isopeptide (Lys-Gly) (interchain with G-Cter in ubiquitin); alternate linkage. Ser-38 is modified (phosphoserine). An N6-lactoyllysine; alternate modification is found at Lys-45. At Lys-48 the chain carries N6-methyllysine. At Lys-59 the chain carries N6,N6-dimethyllysine. Arg-81 carries the dimethylated arginine modification. N6-acetyllysine; alternate is present on Lys-87. Lys-87 carries the post-translational modification N6-lactoyllysine; alternate. The residue at position 87 (Lys-87) is an N6,N6,N6-trimethyllysine; alternate. Omega-N-methylarginine occurs at positions 88 and 94. Residue Lys-110 is modified to N6-lactoyllysine; alternate. Lys-110 is subject to N6-methyllysine. Thr-117 is modified (phosphothreonine). 2 positions are modified to N6-lactoyllysine; alternate: Lys-118 and Lys-122. 2 positions are modified to N6-succinyllysine; alternate: Lys-118 and Lys-122. Residue Lys-118 is modified to N6-methylated lysine; alternate. Lys-122 participates in a covalent cross-link: Glycyl lysine isopeptide (Lys-Gly) (interchain with G-Cter in ubiquitin); alternate.

This sequence belongs to the histone H2B family. The nucleosome is a histone octamer containing two molecules each of H2A, H2B, H3 and H4 assembled in one H3-H4 heterotetramer and two H2A-H2B heterodimers. In terms of processing, monoubiquitination at Lys-36 by the MSL1/MSL2 dimer is required for histone H3 'Lys-4' (H3K4me) and 'Lys-79' (H3K79me) methylation and transcription activation at specific gene loci, such as HOXA9 and MEIS1 loci. Similarly, monoubiquitination of Lys-122 (H2BK120Ub) by the RNF20/40 complex gives a specific tag for epigenetic transcriptional activation and is also prerequisite for histone H3 'Lys-4' and 'Lys-79' methylation. It also functions cooperatively with the FACT dimer to stimulate elongation by RNA polymerase II. H2BK120Ub also acts as a regulator of mRNA splicing: deubiquitination by USP49 is required for efficient cotranscriptional splicing of a large set of exons. Crotonylation (Kcr) is specifically present in male germ cells and marks testis-specific genes in post-meiotic cells, including X-linked genes that escape sex chromosome inactivation in haploid cells. Crotonylation marks active promoters and enhancers and confers resistance to transcriptional repressors. It is also associated with post-meiotically activated genes on autosomes. Post-translationally, acetylated during spermatogenesis. Acetylated form is most abundant in spermatogonia compared to spermatocytes and round spermatids. In terms of processing, phosphorylated at Thr-117 in spermatogonia, spermatocytes and round spermatids. Methylated at Lys-118 in spermatogonia, spermatocytes and round spermatids. Post-translationally, lactylated in macrophages by EP300/P300 by using lactoyl-CoA directly derived from endogenous or exogenous lactate, leading to stimulates gene transcription. In terms of tissue distribution, testis. Expressed in pachytene spermatocytes during meiotic prophase I in the absence of any significant DNA synthesis.

It localises to the nucleus. Its subcellular location is the chromosome. Its function is as follows. Variant histone specifically required to direct the transformation of dissociating nucleosomes to protamine in male germ cells. Entirely replaces classical histone H2B prior nucleosome to protamine transition and probably acts as a nucleosome dissociating factor that creates a more dynamic chromatin, facilitating the large-scale exchange of histones. Core component of nucleosome. Nucleosomes wrap and compact DNA into chromatin, limiting DNA accessibility to the cellular machineries which require DNA as a template. Histones thereby play a central role in transcription regulation, DNA repair, DNA replication and chromosomal stability. DNA accessibility is regulated via a complex set of post-translational modifications of histones, also called histone code, and nucleosome remodeling. In Rattus norvegicus (Rat), this protein is Histone H2B type 1-A.